Here is a 63-residue protein sequence, read N- to C-terminus: Chromatin protein Cren7 (63 aa).

The protein belongs to the Cren7 family. Monomer. In terms of processing, methylated at multiple sites, to varying extents.

The protein localises to the chromosome. It is found in the cytoplasm. Its function is as follows. A chromatin protein, binds double-stranded DNA without sequence specificity. Constrains negative DNA supercoils. The protein is Chromatin protein Cren7 of Pyrobaculum calidifontis (strain DSM 21063 / JCM 11548 / VA1).